The primary structure comprises 2034 residues: Host cell factor 1 (2034 aa).

Ala2 is subject to N-acetylalanine. Residue Ser6 is modified to Phosphoserine. Kelch repeat units follow at residues 44–89 (LIVV…GFVC), 93–140 (RLLV…RLGH), 148–194 (KCYL…ITYG), 217–265 (KLVI…TIGN), and 266–313 (KMYV…LMDT). Residues Lys105, Lys163, and Lys244 each participate in a glycyl lysine isopeptide (Lys-Gly) (interchain with G-Cter in ubiquitin) cross-link. Lys282 participates in a covalent cross-link: Glycyl lysine isopeptide (Lys-Gly) (interchain with G-Cter in SUMO2). Lys288 carries the N6-acetyllysine modification. Lys363 participates in a covalent cross-link: Glycyl lysine isopeptide (Lys-Gly) (interchain with G-Cter in ubiquitin). Residues 366–469 (PPARVQLVRA…TIQVLPTVPG (104 aa)) enclose the Fibronectin type-III 1 domain. Residues 407–434 (ATATSPTPNPVPSVPANPPKSPAPAAAA) are disordered. Phosphoserine is present on Ser411. The span at 413-428 (TPNPVPSVPANPPKSP) shows a compositional bias: pro residues. Residues 500-550 (LVTMRPASQAGKAPVTVTSLPASVRMVVPTQSAQGTVIGSNPQMSGMAALA) form a required for interaction with OGT region. Omega-N-methylarginine occurs at positions 504 and 524. Phosphoserine occurs at positions 598, 666, and 669. An interaction with SIN3A region spans residues 610-722 (LKTAAAQVGT…KGPLPAGTIL (113 aa)). Residues 750–902 (ILGISSVSPS…SLAGAGAHST (153 aa)) form an interaction with ZBTB17 region. An N6-acetyllysine modification is found at Lys813. Positions 813–912 (KIITAVPKIA…SASLATPITT (100 aa)) are interaction with GABP2. 3 HCF repeat repeats span residues 1010 to 1035 (TLVC…TVVA), 1072 to 1097 (VRVC…ATSN), and 1101 to 1126 (QHGC…AMSS). One copy of the HCF repeat 4; degenerate repeat lies at 1156–1182 (RAQGTVKPPCQTQQTNMTSTTMTVQAT). Phosphoserine occurs at positions 1204 and 1223. Disordered stretches follow at residues 1221–1241 (GPSS…TYTT), 1302–1374 (PCET…TTST), 1444–1477 (TVTS…NITS), and 1491–1525 (RAVT…QLPP). HCF repeat repeat units lie at residues 1295–1320 (TQVC…SNAG) and 1323–1348 (QRVC…ATSN). Positions 1308–1321 (TGTTNTATTSNAGS) are enriched in low complexity. The HCF repeat 7; degenerate repeat unit spans residues 1358–1383 (QQPASGHPCETHQTTSTGTTMSVSVG). An HCF repeat 8 repeat occupies 1423-1448 (QRVCSNPPCETHETGTTHTATTVTSN). The segment covering 1491-1501 (RAVTTVTQSTP) has biased composition (low complexity). Position 1500 is a phosphothreonine (Thr1500). A compositionally biased stretch (pro residues) spans 1502–1511 (VPGPSVPPPE). Phosphoserine occurs at positions 1506 and 1516. Positions 1693–1723 (IVLTQQELAALVQQQQQLQEAQAQAQQQHHL) form a coiled coil. At Ser1782 the chain carries Phosphoserine. Fibronectin type-III domains follow at residues 1808–1899 (LPPP…TCLP) and 1901–2017 (FPGA…TSKD). Glycyl lysine isopeptide (Lys-Gly) (interchain with G-Cter in ubiquitin) cross-links involve residues Lys1818 and Lys1819. Ser1849 carries the phosphoserine modification. The disordered stretch occupies residues 2005 to 2034 (ATQVRWLQETSKDSSGTKPASKRPMSSPEM). Lys2016 carries the post-translational modification N6-acetyllysine.

In terms of assembly, composed predominantly of six polypeptides ranging from 110 to 150 kDa and a minor 300 kDa polypeptide. The majority of N- and C-terminal cleavage products remain tightly, albeit non-covalently, associated. Interacts with POU2F1, CREB3, ZBTB17, EGR2, E2F4, CREBZF, SP1, GABP2, Sin3 HDAC complex (SIN3A, HDAC1, HDAC2, SUDS3), SAP30, SIN3B and FHL2. Component of a MLL1 complex, composed of at least the core components KMT2A/MLL1, ASH2L, HCFC1, WDR5 and RBBP5, as well as the facultative components BACC1, CHD8, DPY30, E2F6, HCFC2, HSP70, INO80C, KANSL1, LAS1L, MAX, MCRS1, MEN1, MGA, KAT8, PELP1, PHF20, PRP31, RING2, RUVBL1, RUVBL2, SENP3, TAF1, TAF4, TAF6, TAF7, TAF9 and TEX10. Component of a THAP1/THAP3-HCFC1-OGT complex that is required for the regulation of the transcriptional activity of RRM1. Interacts directly with THAP3 (via its HBM). Interacts (via the Kelch-repeat domain) with THAP1 (via the HBM); the interaction recruits HCHC1 to the RRM1. Interacts with THAP7 and THAP11 (via the HMB). Interacts directly with OGT; the interaction, which requires the HCFC1 cleavage site domain, glycosylates and promotes the proteolytic processing of HCFC1, retains OGT in the nucleus and impacts the expression of herpes simplex virus immediate early viral genes. Component of the SET1 complex, at least composed of the catalytic subunit (SETD1A or SETD1B), WDR5, WDR82, RBBP5, ASH2L, CXXC1, HCFC1 and DPY30. Component of the NSL complex at least composed of MOF/KAT8, KANSL1, KANSL2, KANSL3, MCRS1, PHF20, OGT1/OGT, WDR5 and HCFC1. Component of a complex at least composed of ZNF335, HCFC1, CCAR2, EMSY, MKI67, RBBP5, ASH2L and WDR5; the complex is formed as a result of interactions between components of a nuclear receptor-mediated transcription complex and a histone methylation complex. Within the complex interacts with ZNF335. Interacts with TET2 and TET3. Interacts with HCFC1R1. Interacts with THAP11. Interacts (via Kelch domain) with KMT2E/MLL5 isoform 3 (via HBM motif). Interacts with E2F1. Accessory scaffold component of the polycomb repressive deubiquitinase (PR-DUB) complex, at least composed of BAP1, one of ASXL1, ASXL2 or (probably) ASXL3 and one of MBD5 or MBD6; the PR-DUB core associates with a number of accessory proteins, including FOXK1, FOXK2, KDM1B, HCFC1, YY1 and OGT. Interacts with YY1 (via Gly-rich region); the interaction is direct. Interacts with BAP1 (via HBM-like motif). Post-translationally, proteolytically cleaved at one or several PPCE--THET sites within the HCF repeats. Further cleavage of the primary N- and C-terminal chains results in a 'trimming' and accumulation of the smaller chains. Cleavage is promoted by O-glycosylation. O-glycosylated. GlcNAcylation by OGT promotes proteolytic processing. In terms of processing, ubiquitinated. Lys-1818 and Lys-1819 are ubiquitinated both via 'Lys-48'- and 'Lys-63'-linked polyubiquitin chains. BAP1 mediated deubiquitination of 'Lys-48'-linked polyubiquitin chains; deubiquitination by BAP1 does not seem to stabilize the protein.

The protein resides in the cytoplasm. It is found in the nucleus. Transcriptional coregulator. Serves as a scaffold protein, bridging interactions between transcription factors, including THAP11 and ZNF143, and transcriptional coregulators. Involved in control of the cell cycle. Also antagonizes transactivation by ZBTB17 and GABP2; represses ZBTB17 activation of the p15(INK4b) promoter and inhibits its ability to recruit p300. Coactivator for EGR2 and GABP2. Tethers the chromatin modifying Set1/Ash2 histone H3 'Lys-4' methyltransferase (H3K4me) and Sin3 histone deacetylase (HDAC) complexes (involved in the activation and repression of transcription, respectively) together. Component of a THAP1/THAP3-HCFC1-OGT complex that is required for the regulation of the transcriptional activity of RRM1. As part of the NSL complex it may be involved in acetylation of nucleosomal histone H4 on several lysine residues. Recruits KMT2E/MLL5 to E2F1 responsive promoters promoting transcriptional activation and thereby facilitates G1 to S phase transition. Modulates expression of homeobox protein PDX1, perhaps acting in concert with transcription factor E2F1, thereby regulating pancreatic beta-cell growth and glucose-stimulated insulin secretion. May negatively modulate transcriptional activity of FOXO3. The sequence is that of Host cell factor 1 from Rattus norvegicus (Rat).